Here is a 98-residue protein sequence, read N- to C-terminus: Small ribosomal subunit protein bS20 (98 aa).

The protein belongs to the bacterial ribosomal protein bS20 family.

In terms of biological role, binds directly to 16S ribosomal RNA. The protein is Small ribosomal subunit protein bS20 of Parasynechococcus marenigrum (strain WH8102).